A 63-amino-acid chain; its full sequence is Metallothionein-like protein type 3 (63 aa).

Belongs to the metallothionein superfamily. Type 15 family.

Metallothioneins have a high content of cysteine residues that bind various heavy metals. The polypeptide is Metallothionein-like protein type 3 (Actinidia deliciosa (Kiwi)).